A 333-amino-acid polypeptide reads, in one-letter code: N-acetyl-gamma-glutamyl-phosphate reductase (333 aa).

C145 is a catalytic residue.

This sequence belongs to the NAGSA dehydrogenase family. Type 1 subfamily.

The protein localises to the cytoplasm. The enzyme catalyses N-acetyl-L-glutamate 5-semialdehyde + phosphate + NADP(+) = N-acetyl-L-glutamyl 5-phosphate + NADPH + H(+). Its pathway is amino-acid biosynthesis; L-arginine biosynthesis; N(2)-acetyl-L-ornithine from L-glutamate: step 3/4. Functionally, catalyzes the NADPH-dependent reduction of N-acetyl-5-glutamyl phosphate to yield N-acetyl-L-glutamate 5-semialdehyde. The polypeptide is N-acetyl-gamma-glutamyl-phosphate reductase (Salinispora arenicola (strain CNS-205)).